We begin with the raw amino-acid sequence, 270 residues long: Acyl-[acyl-carrier-protein]--UDP-N-acetylglucosamine O-acyltransferase (270 aa).

The protein belongs to the transferase hexapeptide repeat family. LpxA subfamily. Homotrimer.

Its subcellular location is the cytoplasm. It catalyses the reaction a (3R)-hydroxyacyl-[ACP] + UDP-N-acetyl-alpha-D-glucosamine = a UDP-3-O-[(3R)-3-hydroxyacyl]-N-acetyl-alpha-D-glucosamine + holo-[ACP]. It participates in glycolipid biosynthesis; lipid IV(A) biosynthesis; lipid IV(A) from (3R)-3-hydroxytetradecanoyl-[acyl-carrier-protein] and UDP-N-acetyl-alpha-D-glucosamine: step 1/6. Functionally, involved in the biosynthesis of lipid A, a phosphorylated glycolipid that anchors the lipopolysaccharide to the outer membrane of the cell. In Helicobacter pylori (strain P12), this protein is Acyl-[acyl-carrier-protein]--UDP-N-acetylglucosamine O-acyltransferase.